A 273-amino-acid polypeptide reads, in one-letter code: Nucleotide-binding protein TTHA0319 (273 aa).

G8 to T15 provides a ligand contact to ATP. D57–A60 lines the GTP pocket.

Belongs to the RapZ-like family.

In terms of biological role, displays ATPase and GTPase activities. The protein is Nucleotide-binding protein TTHA0319 of Thermus thermophilus (strain ATCC 27634 / DSM 579 / HB8).